Consider the following 276-residue polypeptide: MTAASTTATTMLQATQSDVLQEIQSNFLLNSSIWVNIALAGVVILLFVAMGRDIESPRAKLIWVATMLVPLVSISSYAGLASGLTVGFLQMPPGHALAGQEVLSPWGRYLTWTFSTPMILLALGLLADTDIASLFTAITMDIGMCVTGLAAALITSSHLLRWVFYGISCAFFVAVLYVLLVQWPADAEAAGTSEIFGTLKILTVVLWLGYPILWALGSEGVALLSVGVTSWGYSGLDILAKYVFAFLLLRWVAANEGAVSGSGMSIGSGGAAPADD.

A propeptide spanning residues 1-21 is cleaved from the precursor; sequence MTAASTTATTMLQATQSDVLQ. The Extracellular portion of the chain corresponds to 22–25; that stretch reads EIQS. The helical transmembrane segment at 26 to 51 threads the bilayer; it reads NFLLNSSIWVNIALAGVVILLFVAMG. Over 52 to 57 the chain is Cytoplasmic; it reads RDIESP. Residues 58–81 form a helical membrane-spanning segment; the sequence is RAKLIWVATMLVPLVSISSYAGLA. Over 82 to 105 the chain is Extracellular; that stretch reads SGLTVGFLQMPPGHALAGQEVLSP. The helical transmembrane segment at 106–127 threads the bilayer; sequence WGRYLTWTFSTPMILLALGLLA. Residues 128 to 130 lie on the Cytoplasmic side of the membrane; it reads DTD. Residues 131–154 form a helical membrane-spanning segment; that stretch reads IASLFTAITMDIGMCVTGLAAALI. The Extracellular portion of the chain corresponds to 155 to 157; that stretch reads TSS. A helical membrane pass occupies residues 158–180; sequence HLLRWVFYGISCAFFVAVLYVLL. At 181 to 192 the chain is on the cytoplasmic side; it reads VQWPADAEAAGT. A helical membrane pass occupies residues 193-216; sequence SEIFGTLKILTVVLWLGYPILWAL. The Extracellular portion of the chain corresponds to 217–225; sequence GSEGVALLS. Residues 226 to 254 form a helical membrane-spanning segment; that stretch reads VGVTSWGYSGLDILAKYVFAFLLLRWVAA. Lys-241 is modified (N6-(retinylidene)lysine). The Cytoplasmic segment spans residues 255 to 276; it reads NEGAVSGSGMSIGSGGAAPADD.

This sequence belongs to the archaeal/bacterial/fungal opsin family.

The protein resides in the cell membrane. Functionally, light-driven chloride pump. This chain is Halorhodopsin (hop), found in Halobacterium halobium (strain port).